Consider the following 103-residue polypeptide: Large ribosomal subunit protein uL24 (103 aa).

It belongs to the universal ribosomal protein uL24 family. Part of the 50S ribosomal subunit.

Its function is as follows. One of two assembly initiator proteins, it binds directly to the 5'-end of the 23S rRNA, where it nucleates assembly of the 50S subunit. In terms of biological role, one of the proteins that surrounds the polypeptide exit tunnel on the outside of the subunit. This Bacillus cytotoxicus (strain DSM 22905 / CIP 110041 / 391-98 / NVH 391-98) protein is Large ribosomal subunit protein uL24.